A 492-amino-acid chain; its full sequence is Solute carrier family 2, facilitated glucose transporter member 1 (492 aa).

N-acetylmethionine is present on Met-1. Residues 1-11 (MEPTSKKLTGR) lie on the Cytoplasmic side of the membrane. The chain crosses the membrane as a helical span at residues 12 to 33 (LMLAVGGAVLGSLQFGYNTGVI). At 34-66 (NAPQKVIEEFYNQTWVQRYGEPIPPATLTTLWS) the chain is on the extracellular side. An N-linked (GlcNAc...) asparagine glycan is attached at Asn-45. Residues 67–87 (LSVAIFSVGGMIGSFSVGLFV) form a helical membrane-spanning segment. Residues 88-90 (NRF) lie on the Cytoplasmic side of the membrane. Residues 91–112 (GRRNSMLMMNLLAFVSAVLMGF) traverse the membrane as a helical segment. The Extracellular segment spans residues 113–120 (SKLGKSFE). The chain crosses the membrane as a helical span at residues 121 to 144 (MLILGRFIIGVYCGLTTGFVPMYV). Residues 145-155 (GEVSPTELRGA) lie on the Cytoplasmic side of the membrane. A helical membrane pass occupies residues 156–176 (LGTLHQLGIVVGILIAQVFGL). Gln-161 contacts D-glucose. Residues 177–185 (DSIMGNQEL) are Extracellular-facing. A helical transmembrane segment spans residues 186-206 (WPLLLSVIFIPALLQCILLPF). The Cytoplasmic segment spans residues 207-271 (CPESPRFLLI…LFRSAAYRQP (65 aa)). Ser-226 is subject to Phosphoserine. Residues 272–293 (ILIAVVLQLSQQLSGINAVFYY) traverse the membrane as a helical segment. D-glucose contacts are provided by residues 282-283 (QQ) and Asn-288. Residues 294-306 (STSIFEKAGVQQP) lie on the Extracellular side of the membrane. The chain crosses the membrane as a helical span at residues 307–328 (VYATIGSGIVNTAFTVVSLFVV). Asn-317 is a binding site for D-glucose. The Cytoplasmic segment spans residues 329–334 (ERAGRR). The chain crosses the membrane as a helical span at residues 335 to 355 (TLHLIGLAGMAGCAVLMTIAL). The Extracellular segment spans residues 356 to 365 (ALLERLPWMS). A helical transmembrane segment spans residues 366-388 (YLSIVAIFGFVAFFEVGPGPIPW). 2 residues coordinate D-glucose: Glu-380 and Trp-388. Over 389 to 401 (FIVAELFSQGPRP) the chain is Cytoplasmic. The chain crosses the membrane as a helical span at residues 402–422 (AAIAVAGFSNWTSNFIVGMCF). At 423 to 429 (QYVEQLC) the chain is on the extracellular side. The helical transmembrane segment at 430–450 (GPYVFIIFTVLLVLFFIFTYF) threads the bilayer. Topologically, residues 451–492 (KVPETKGRTFDEIASGFRQGGASQSDKTPEELFHPLGADSQV) are cytoplasmic. Ser-465 carries the post-translational modification Phosphoserine. The segment at 468–492 (RQGGASQSDKTPEELFHPLGADSQV) is disordered. Residue Thr-478 is modified to Phosphothreonine. Ser-490 is modified (phosphoserine).

This sequence belongs to the major facilitator superfamily. Sugar transporter (TC 2.A.1.1) family. Glucose transporter subfamily. Found in a complex with ADD2, DMTN and SLC2A1. Interacts (via C-terminus cytoplasmic region) with DMTN. Interacts with SNX27; the interaction is required when endocytosed to prevent degradation in lysosomes and promote recycling to the plasma membrane. Interacts with GIPC (via PDZ domain). Interacts with STOM. Interacts with SGTA (via Gln-rich region). Interacts with BSG. Interacts with SMIM43; the interaction may promote SLC2A1-mediated glucose transport to meet the energy needs of mesendoderm differentiation. Phosphorylation at Ser-226 by PKC promotes glucose uptake by increasing cell membrane localization. Detected in brain capillary (at protein level). Detected in brain capillary.

The protein resides in the cell membrane. The protein localises to the photoreceptor inner segment. It catalyses the reaction D-glucose(out) = D-glucose(in). With respect to regulation, the uptake of glucose is inhibited by cytochalasin B. Glucose uptake is increased in response to phorbol ester 12-O-tetradecanoylphorbol-13-acetate (TPA) treatment: TPA-induced glucose uptake requires phosphorylation at Ser-226. In terms of biological role, facilitative glucose transporter, which is responsible for constitutive or basal glucose uptake. Has a very broad substrate specificity; can transport a wide range of aldoses including both pentoses and hexoses. Most important energy carrier of the brain: present at the blood-brain barrier and assures the energy-independent, facilitative transport of glucose into the brain. In association with BSG and NXNL1, promotes retinal cone survival by increasing glucose uptake into photoreceptors. Required for mesendoderm differentiation. The sequence is that of Solute carrier family 2, facilitated glucose transporter member 1 from Bos taurus (Bovine).